We begin with the raw amino-acid sequence, 918 residues long: Interleukin-6 receptor subunit beta (918 aa).

A signal peptide spans 1-22 (MLTLQTWLVQALFIFLTTESTG). The Extracellular segment spans residues 23-619 (ELLDPCGYIS…TPKFAQGEIE (597 aa)). Residues 26–120 (DPCGYISPES…LEQNVYGITI (95 aa)) enclose the Ig-like C2-type domain. 2 disulfides stabilise this stretch: Cys-28/Cys-54 and Cys-48/Cys-103. Residues Asn-43, Asn-83, and Asn-131 are each glycosylated (N-linked (GlcNAc...) asparagine). 5 consecutive Fibronectin type-III domains span residues 125–216 (PPEK…NFDP), 224–324 (PPHN…TYED), 329–424 (APSF…FQAT), 426–517 (PVMD…LKQA), and 518–613 (PPSK…TPKF). Cys-134 and Cys-144 form a disulfide bridge. Asn-157 carries an N-linked (GlcNAc...) asparagine glycan. Cys-172 and Cys-182 are joined by a disulfide. An N-linked (GlcNAc...) asparagine glycan is attached at Asn-227. Residues 310-314 (WSDWS) carry the WSXWS motif motif. N-linked (GlcNAc...) asparagine glycans are attached at residues Asn-379 and Asn-383. An N-linked (GlcNAc...) (complex) asparagine glycan is attached at Asn-390. Cys-458 and Cys-466 form a disulfide bridge. Asn-553 and Asn-564 each carry an N-linked (GlcNAc...) asparagine glycan. Residues 620 to 641 (AIVVPVCLAFLLTTLLGVLFCF) form a helical membrane-spanning segment. Residues 642 to 918 (NKRDLIKKHI…TVRQGGYMPQ (277 aa)) are Cytoplasmic-facing. The short motif at 651–659 (IWPNVPDPS) is the Box 1 motif element. 2 disordered regions span residues 660-681 (KSHI…SKDQ) and 722-758 (EGHS…STVQ). Ser-661 and Ser-667 each carry phosphoserine. Residues 731-755 (SSCMSSSRPSISSSDENESSQNTSS) show a composition bias toward low complexity. Ser-782, Ser-789, Ser-829, and Ser-839 each carry phosphoserine.

It belongs to the type I cytokine receptor family. Type 2 subfamily. In terms of assembly, component of a hexamer of two molecules each of IL6, IL6R and IL6ST; associates with the complex IL6:IL6R but does not interact with IL6. Forms heterodimers composed of LIFR and IL6ST (type I OSM receptor) which are activated by LIF and OSM. Also forms heterodimers composed of OSMR and IL6ST (type II receptor) which are activated by OSM but not by LIF. Component of a receptor complex composed of IL6ST/GP130, IL27RA/WSX1 and CNTFR which interacts with the neuroprotective peptide humanin. Interacts with HCK. Interacts with INPP5D/SHIP1. Interacts with SRC and YES. Interacts with ARMH4; this interaction prevents IL6ST protein homodimerization and bridges ARMH4 with IL6R and STAT3 and therefore inhibits phosphorylation of STAT3 at 'Tyr-705'. (Microbial infection) The homodimer binds two molecules of herpes virus 8/HHV-8 protein vIL-6. Post-translationally, phosphorylation of Ser-782 down-regulates cell surface expression. In terms of processing, heavily N-glycosylated. Glycosylation is required for protein stability and localization in plasma membrane but not for ligand binding. As to expression, found in all the tissues and cell lines examined. Expression not restricted to IL6 responsive cells. Expressed in blood serum (at protein level).

It is found in the cell membrane. The protein localises to the secreted. Its function is as follows. Signal-transducing molecule. The receptor systems for IL6, LIF, OSM, CNTF, IL11, CTF1 and BSF3 can utilize IL6ST for initiating signal transmission. Binding of IL6 to IL6R induces IL6ST homodimerization and formation of a high-affinity receptor complex, which activates the intracellular JAK-MAPK and JAK-STAT3 signaling pathways. That causes phosphorylation of IL6ST tyrosine residues which in turn activates STAT3. In parallel, the IL6 signaling pathway induces the expression of two cytokine receptor signaling inhibitors, SOCS1 and SOCS3, which inhibit JAK and terminate the activity of the IL6 signaling pathway as a negative feedback loop. Also activates the yes-associated protein 1 (YAP) and NOTCH pathways to control inflammation-induced epithelial regeneration, independently of STAT3. Acts as a receptor for the neuroprotective peptide humanin as part of a complex with IL27RA/WSX1 and CNTFR. Mediates signals which regulate immune response, hematopoiesis, pain control and bone metabolism. Has a role in embryonic development. Essential for survival of motor and sensory neurons and for differentiation of astrocytes. Required for expression of TRPA1 in nociceptive neurons. Required for the maintenance of PTH1R expression in the osteoblast lineage and for the stimulation of PTH-induced osteoblast differentiation. Required for normal trabecular bone mass and cortical bone composition. Functionally, binds to the soluble IL6:sIL6R complex (hyper-IL6), thereby blocking IL6 trans-signaling. Inhibits sIL6R-dependent acute phase response. Also blocks IL11 cluster signaling through IL11R. In Homo sapiens (Human), this protein is Interleukin-6 receptor subunit beta.